The following is a 72-amino-acid chain: Bowman-Birk type trypsin inhibitor (72 aa).

Cystine bridges form between C12-C66, C13-C28, C16-C62, C18-C26, C36-C43, C40-C55, and C45-C53.

This sequence belongs to the Bowman-Birk serine protease inhibitor family.

The chain is Bowman-Birk type trypsin inhibitor from Vigna radiata var. radiata (Mung bean).